The sequence spans 112 residues: T cell receptor alpha variable 12-1 (112 aa).

Positions 1–20 are cleaved as a signal peptide; it reads MISLRVLLVILWLQLSWVWS. One can recognise an Ig-like domain in the interval 23–112; sequence KEVEQDPGPF…DSATYLCVVN (90 aa). A glycan (N-linked (GlcNAc...) asparagine) is linked at asparagine 43. Cysteine 44 and cysteine 109 are joined by a disulfide.

Alpha-beta TR is a heterodimer composed of an alpha and beta chain; disulfide-linked. The alpha-beta TR is associated with the transmembrane signaling CD3 coreceptor proteins to form the TR-CD3 (TcR or TCR). The assembly of alpha-beta TR heterodimers with CD3 occurs in the endoplasmic reticulum where a single alpha-beta TR heterodimer associates with one CD3D-CD3E heterodimer, one CD3G-CD3E heterodimer and one CD247 homodimer forming a stable octameric structure. CD3D-CD3E and CD3G-CD3E heterodimers preferentially associate with TR alpha and TR beta chains, respectively. The association of the CD247 homodimer is the last step of TcR assembly in the endoplasmic reticulum and is required for transport to the cell surface.

The protein resides in the cell membrane. Functionally, v region of the variable domain of T cell receptor (TR) alpha chain that participates in the antigen recognition. Alpha-beta T cell receptors are antigen specific receptors which are essential to the immune response and are present on the cell surface of T lymphocytes. Recognize peptide-major histocompatibility (MH) (pMH) complexes that are displayed by antigen presenting cells (APC), a prerequisite for efficient T cell adaptive immunity against pathogens. Binding of alpha-beta TR to pMH complex initiates TR-CD3 clustering on the cell surface and intracellular activation of LCK that phosphorylates the ITAM motifs of CD3G, CD3D, CD3E and CD247 enabling the recruitment of ZAP70. In turn ZAP70 phosphorylates LAT, which recruits numerous signaling molecules to form the LAT signalosome. The LAT signalosome propagates signal branching to three major signaling pathways, the calcium, the mitogen-activated protein kinase (MAPK) kinase and the nuclear factor NF-kappa-B (NF-kB) pathways, leading to the mobilization of transcription factors that are critical for gene expression and essential for T cell growth and differentiation. The T cell repertoire is generated in the thymus, by V-(D)-J rearrangement. This repertoire is then shaped by intrathymic selection events to generate a peripheral T cell pool of self-MH restricted, non-autoaggressive T cells. Post-thymic interaction of alpha-beta TR with the pMH complexes shapes TR structural and functional avidity. In Homo sapiens (Human), this protein is T cell receptor alpha variable 12-1.